Here is a 446-residue protein sequence, read N- to C-terminus: Histidine--tRNA ligase (446 aa).

Belongs to the class-II aminoacyl-tRNA synthetase family. As to quaternary structure, homodimer.

The protein resides in the cytoplasm. The catalysed reaction is tRNA(His) + L-histidine + ATP = L-histidyl-tRNA(His) + AMP + diphosphate + H(+). The sequence is that of Histidine--tRNA ligase from Burkholderia ambifaria (strain MC40-6).